A 345-amino-acid polypeptide reads, in one-letter code: Uroporphyrinogen decarboxylase (345 aa).

Residues 27–31 (RQAGR), Phe-46, Asp-76, Tyr-152, Ser-207, and His-320 contribute to the substrate site.

It belongs to the uroporphyrinogen decarboxylase family. As to quaternary structure, homodimer.

Its subcellular location is the cytoplasm. The catalysed reaction is uroporphyrinogen III + 4 H(+) = coproporphyrinogen III + 4 CO2. It participates in porphyrin-containing compound metabolism; protoporphyrin-IX biosynthesis; coproporphyrinogen-III from 5-aminolevulinate: step 4/4. Its function is as follows. Catalyzes the decarboxylation of four acetate groups of uroporphyrinogen-III to yield coproporphyrinogen-III. The chain is Uroporphyrinogen decarboxylase from Geobacillus kaustophilus (strain HTA426).